We begin with the raw amino-acid sequence, 580 residues long: Potassium-transporting ATPase potassium-binding subunit (580 aa).

The next 10 helical transmembrane spans lie at 3–23 (ASGA…SVPL), 65–85 (DYAF…YALQ), 136–156 (GLGV…VALI), 179–199 (LYIL…QGVV), 263–283 (LSNF…CHTF), 293–313 (GWAV…ACVA), 399–419 (GLYG…LMVG), 436–456 (MASL…AIAV), 504–524 (AIGV…LALA), and 546–566 (LFVG…FVPA).

This sequence belongs to the KdpA family. As to quaternary structure, the system is composed of three essential subunits: KdpA, KdpB and KdpC.

Its subcellular location is the cell inner membrane. Functionally, part of the high-affinity ATP-driven potassium transport (or Kdp) system, which catalyzes the hydrolysis of ATP coupled with the electrogenic transport of potassium into the cytoplasm. This subunit binds the periplasmic potassium ions and delivers the ions to the membrane domain of KdpB through an intramembrane tunnel. The protein is Potassium-transporting ATPase potassium-binding subunit of Sorangium cellulosum (strain So ce56) (Polyangium cellulosum (strain So ce56)).